We begin with the raw amino-acid sequence, 505 residues long: Glycerol kinase (505 aa).

T15 lines the ADP pocket. ATP-binding residues include T15, T16, and S17. Sn-glycerol 3-phosphate is bound at residue T15. R19 is an ADP binding site. Positions 85, 86, 136, and 249 each coordinate sn-glycerol 3-phosphate. Positions 85, 86, 136, 249, and 250 each coordinate glycerol. The ADP site is built by T271 and G314. Residues T271, G314, Q318, and G415 each contribute to the ATP site. ADP-binding residues include G415 and N419.

Belongs to the FGGY kinase family.

It catalyses the reaction glycerol + ATP = sn-glycerol 3-phosphate + ADP + H(+). It functions in the pathway polyol metabolism; glycerol degradation via glycerol kinase pathway; sn-glycerol 3-phosphate from glycerol: step 1/1. Its activity is regulated as follows. Inhibited by fructose 1,6-bisphosphate (FBP). Functionally, key enzyme in the regulation of glycerol uptake and metabolism. Catalyzes the phosphorylation of glycerol to yield sn-glycerol 3-phosphate. This Mycoplasma capricolum subsp. capricolum (strain California kid / ATCC 27343 / NCTC 10154) protein is Glycerol kinase.